A 414-amino-acid polypeptide reads, in one-letter code: Multidrug resistance protein MdtG (414 aa).

A run of 10 helical transmembrane segments spans residues 14–34 (LFVTWLGCFLTGAAFSLIMPF), 56–76 (LVFSITFLFSAIAAPFWGSLA), 89–109 (ALGMGIVMVLMGMAQNIWQFL), 113–133 (ALLGLLGGFIPNANALIATQV), 144–164 (TLSTGGVSGALIGPLIGGLLA), 171–191 (PVFFITAAVLFACFVMTWFYV), 219–239 (ILSLFVTTMIIQIATGSIAPI), 254–274 (LAFVSGMIASVPGVAALISAP), 288–308 (ILIAMLALSVLILIPMAFVQT), and 376–396 (AVFCVTAVVVLFNALYSYWCL).

It belongs to the major facilitator superfamily. DHA1 family. MdtG (TC 2.A.1.2.20) subfamily.

The protein localises to the cell inner membrane. The chain is Multidrug resistance protein MdtG from Yersinia enterocolitica serotype O:8 / biotype 1B (strain NCTC 13174 / 8081).